Here is a 79-residue protein sequence, read N- to C-terminus: Cytochrome b (79 aa).

The next 3 helical transmembrane spans lie at 1 to 7, 31 to 52, and 67 to 79; these read SALFLAM, WLIR…YLHI, and WNIG…LTMA. Heme b-binding residues include histidine 37 and histidine 51.

This sequence belongs to the cytochrome b family. As to quaternary structure, the cytochrome bc1 complex contains 11 subunits: 3 respiratory subunits (MT-CYB, CYC1 and UQCRFS1), 2 core proteins (UQCRC1 and UQCRC2) and 6 low-molecular weight proteins (UQCRH/QCR6, UQCRB/QCR7, UQCRQ/QCR8, UQCR10/QCR9, UQCR11/QCR10 and a cleavage product of UQCRFS1). This cytochrome bc1 complex then forms a dimer. Heme b serves as cofactor.

Its subcellular location is the mitochondrion inner membrane. In terms of biological role, component of the ubiquinol-cytochrome c reductase complex (complex III or cytochrome b-c1 complex) that is part of the mitochondrial respiratory chain. The b-c1 complex mediates electron transfer from ubiquinol to cytochrome c. Contributes to the generation of a proton gradient across the mitochondrial membrane that is then used for ATP synthesis. In Dipodomys californicus (California kangaroo rat), this protein is Cytochrome b (MT-CYB).